Reading from the N-terminus, the 33-residue chain is Helofensin-1 (33 aa).

The protein belongs to the beta-defensin family. Helofensin subfamily. Expressed by the venom gland.

Its subcellular location is the secreted. In terms of biological role, lethal toxin which possesses an inhibitory effect on direct electrical stimulation of the isolated hemi-diaphragm. Neither hemorrhagic nor hemolytic activities are detected. Phospholipase A2 activity, proteolytic activity and arginine esterolytic activity are absent. The sequence is that of Helofensin-1 from Heloderma horridum horridum (Mexican beaded lizard).